Reading from the N-terminus, the 88-residue chain is MLGVQAQMPAPGQWTTPPFDPRFPNQNQTRNCYQNFLDYHRCVKTMDRRGKNTQACDYYFRVFHSLCPVSWVQRWNEQIKQGTFPGKI.

The interval 1–21 is disordered; sequence MLGVQAQMPAPGQWTTPPFDP. The region spanning 29–75 is the CHCH domain; the sequence is TRNCYQNFLDYHRCVKTMDRRGKNTQACDYYFRVFHSLCPVSWVQRW. The short motif at 32–42 is the Cx9C motif element; that stretch reads CYQNFLDYHRC. Disulfide bonds link C32–C67 and C42–C56. The Cx10C motif signature appears at 56 to 67; sequence CDYYFRVFHSLC.

The protein belongs to the cytochrome c oxidase subunit 6B family. As to quaternary structure, component of the cytochrome c oxidase (complex IV, CIV), a multisubunit enzyme composed of 14 subunits. The complex is composed of a catalytic core of 3 subunits MT-CO1, MT-CO2 and MT-CO3, encoded in the mitochondrial DNA, and 11 supernumerary subunits COX4I, COX5A, COX5B, COX6A, COX6B, COX6C, COX7A, COX7B, COX7C, COX8 and NDUFA4, which are encoded in the nuclear genome. The complex exists as a monomer or a dimer and forms supercomplexes (SCs) in the inner mitochondrial membrane with NADH-ubiquinone oxidoreductase (complex I, CI) and ubiquinol-cytochrome c oxidoreductase (cytochrome b-c1 complex, complex III, CIII), resulting in different assemblies (supercomplex SCI(1)III(2)IV(1) and megacomplex MCI(2)III(2)IV(2)). As to expression, testis specific.

Its subcellular location is the mitochondrion inner membrane. The protein operates within energy metabolism; oxidative phosphorylation. Component of the cytochrome c oxidase, the last enzyme in the mitochondrial electron transport chain which drives oxidative phosphorylation. The respiratory chain contains 3 multisubunit complexes succinate dehydrogenase (complex II, CII), ubiquinol-cytochrome c oxidoreductase (cytochrome b-c1 complex, complex III, CIII) and cytochrome c oxidase (complex IV, CIV), that cooperate to transfer electrons derived from NADH and succinate to molecular oxygen, creating an electrochemical gradient over the inner membrane that drives transmembrane transport and the ATP synthase. Cytochrome c oxidase is the component of the respiratory chain that catalyzes the reduction of oxygen to water. Electrons originating from reduced cytochrome c in the intermembrane space (IMS) are transferred via the dinuclear copper A center (CU(A)) of subunit 2 and heme A of subunit 1 to the active site in subunit 1, a binuclear center (BNC) formed by heme A3 and copper B (CU(B)). The BNC reduces molecular oxygen to 2 water molecules using 4 electrons from cytochrome c in the IMS and 4 protons from the mitochondrial matrix. This Rattus norvegicus (Rat) protein is Cytochrome c oxidase subunit 6B2 (Cox6b2).